Reading from the N-terminus, the 165-residue chain is MELYFFRHGIAADRADYAEDGDRPLTTKGETRTKLVAQRLQQLGLHFEGILTSPLLRARQTAEILAAAELGPHPQVFQGLAPRGSLGAFLAWLERWEAAPDAKLVLVGHQPDLGEWAEAIAFGQTGHHLNLKKAGIIGLRSGAARIQAHTDNELFLLTSPKWLLP.

The protein belongs to the SixA phosphatase family.

This is an uncharacterized protein from Picosynechococcus sp. (strain ATCC 27264 / PCC 7002 / PR-6) (Agmenellum quadruplicatum).